Here is a 137-residue protein sequence, read N- to C-terminus: Lysozyme (137 aa).

The signal sequence occupies residues 1 to 20 (MSAVLVLALVLLSLTCVTDA). Positions 21 to 134 (ISDACLTCIC…WNAVKNQGCS (114 aa)) constitute an I-type lysozyme domain. 6 disulfides stabilise this stretch: Cys25/Cys102, Cys30/Cys37, Cys42/Cys51, Cys64/Cys84, Cys74/Cys80, and Cys98/Cys116. Glu33 acts as the Proton donor in catalysis. The active-site Nucleophile is Asp45. 57–63 (KKSYWID) is a substrate binding site. Residues Tyr88 and 109–111 (HNG) each bind substrate.

This sequence belongs to the glycosyl hydrolase 22 family. Type-I lysozyme subfamily.

The protein localises to the secreted. The enzyme catalyses Hydrolysis of (1-&gt;4)-beta-linkages between N-acetylmuramic acid and N-acetyl-D-glucosamine residues in a peptidoglycan and between N-acetyl-D-glucosamine residues in chitodextrins.. Functionally, has bacteriolytic activity. May play a role in digestion and in the host defense mechanisms against invading microbes. This chain is Lysozyme (lysoz), found in Ostrea edulis (Native oyster).